The primary structure comprises 351 residues: Rhodopsin (351 aa).

Over methionine 1–glycine 36 the chain is Extracellular. Residues asparagine 2 and asparagine 15 are each glycosylated (N-linked (GlcNAc...) asparagine). Residues tyrosine 37–valine 61 traverse the membrane as a helical segment. Residues threonine 62 to asparagine 73 lie on the Cytoplasmic side of the membrane. Residues tyrosine 74–tryptophan 96 traverse the membrane as a helical segment. Topologically, residues threonine 97–cysteine 110 are extracellular. A disulfide bond links cysteine 110 and cysteine 187. The chain crosses the membrane as a helical span at residues asparagine 111 to methionine 133. Positions glutamate 134 to tryptophan 136 match the 'Ionic lock' involved in activated form stabilization motif. Residues glutamate 134–histidine 152 lie on the Cytoplasmic side of the membrane. Residues alanine 153–valine 173 form a helical membrane-spanning segment. Topologically, residues glycine 174–serine 202 are extracellular. Residue asparagine 200 is glycosylated (N-linked (GlcNAc...) asparagine). Residues phenylalanine 203–glycine 224 traverse the membrane as a helical segment. Residues arginine 225–arginine 252 are Cytoplasmic-facing. The helical transmembrane segment at methionine 253–tyrosine 274 threads the bilayer. At isoleucine 275–valine 286 the chain is on the extracellular side. A helical transmembrane segment spans residues phenylalanine 287 to cysteine 308. Lysine 296 is modified (N6-(retinylidene)lysine). Residues leucine 309–alanine 351 are Cytoplasmic-facing. Residues cysteine 322 and cysteine 323 are each lipidated (S-palmitoyl cysteine). Residues glutamate 330–alanine 351 form a disordered region. Positions serine 334–alanine 351 are enriched in polar residues.

This sequence belongs to the G-protein coupled receptor 1 family. Opsin subfamily. Post-translationally, phosphorylated on some or all of the serine and threonine residues present in the C-terminal region. Contains one covalently linked retinal chromophore.

It localises to the membrane. The protein localises to the cell projection. The protein resides in the cilium. Its subcellular location is the photoreceptor outer segment. Its function is as follows. Photoreceptor required for image-forming vision at low light intensity. While most salt water fish species use retinal as chromophore, most freshwater fish use 3-dehydroretinal, or a mixture of retinal and 3-dehydroretinal. Light-induced isomerization of 11-cis to all-trans retinal triggers a conformational change that activates signaling via G-proteins. Subsequent receptor phosphorylation mediates displacement of the bound G-protein alpha subunit by arrestin and terminates signaling. The protein is Rhodopsin (rho) of Sardina pilchardus (European pilchard).